The chain runs to 51 residues: Small ribosomal subunit protein eS31 (51 aa).

Zn(2+) is bound by residues Cys-22, Cys-25, Cys-40, and Cys-43. The C4-type zinc-finger motif lies at 22–43 (CPRCGPGVFMADHGDRWACGRC).

This sequence belongs to the eukaryotic ribosomal protein eS31 family. As to quaternary structure, part of the 30S ribosomal subunit. Requires Zn(2+) as cofactor.

This Pyrococcus abyssi (strain GE5 / Orsay) protein is Small ribosomal subunit protein eS31.